Consider the following 243-residue polypeptide: uncharacterized protein (243 aa).

In terms of domain architecture, GP-PDE spans T2–L240.

This is an uncharacterized protein from Bacillus subtilis (strain 168).